A 327-amino-acid chain; its full sequence is Taste receptor type 2 member 102 (327 aa).

At 1–7 (MEPVIYS) the chain is on the extracellular side. Residues 8–28 (FATLLIHVEFIFGNLSNGFIV) form a helical membrane-spanning segment. Topologically, residues 29–46 (LSNFWDWVIKRKLSTIDK) are cytoplasmic. A helical transmembrane segment spans residues 47-67 (ILLTLAISRITLIWEIYTWFT). The Extracellular segment spans residues 68-87 (SVYGPSSFAIGMKLQILYFT). Residues 88 to 108 (WILSSHFSLWFATALSIFYLL) form a helical membrane-spanning segment. Residues 109–124 (RIANCSWKIFLYLKWR) lie on the Cytoplasmic side of the membrane. The chain crosses the membrane as a helical span at residues 125–145 (LKQVIVGMLLASLVFLPGILT). The Extracellular segment spans residues 146 to 179 (QRTLEERPYRYGGNTSEDSMETDFARFTELILFN). N-linked (GlcNAc...) asparagine glycosylation is found at N159 and N179. The chain crosses the membrane as a helical span at residues 180–200 (LTIFSVIPFSLASISFLLLIF). Residues 201 to 229 (SLWKHLRKMQLSSRGHGDPSTKAHTNALR) lie on the Cytoplasmic side of the membrane. The chain crosses the membrane as a helical span at residues 230–250 (IMVSFLLLYSIYFLSLLLSWI). Residues 251–260 (AQKHHSKLVD) are Extracellular-facing. A helical transmembrane segment spans residues 261-281 (IIGIITGLMYPSAHSFILILG). The Cytoplasmic portion of the chain corresponds to 282–327 (NSKLMQTSLWILSHLRCRLKGENILNPSGNQVTSCYIFCIANKSVS).

Belongs to the G-protein coupled receptor T2R family.

Its subcellular location is the membrane. In terms of biological role, putative taste receptor which may play a role in the perception of bitterness. This chain is Taste receptor type 2 member 102, found in Rattus norvegicus (Rat).